Consider the following 170-residue polypeptide: N-glycosidase R617 (170 aa).

Belongs to the YbiA family.

It carries out the reaction 2,5-diamino-6-hydroxy-4-(5-phosphoribosylamino)-pyrimidine + H2O = 2,5,6-triamino-4-hydroxypyrimidine + D-ribose 5-phosphate. It catalyses the reaction 5-amino-6-(5-phospho-D-ribosylamino)uracil + H2O = 5,6-diaminouracil + D-ribose 5-phosphate. Its function is as follows. Catalyzes the hydrolysis of the N-glycosidic bond in the first two intermediates of riboflavin biosynthesis, which are highly reactive metabolites, yielding relatively innocuous products. Thus, can divert a surplus of harmful intermediates into relatively harmless products and pre-empt the damage these intermediates would otherwise do. May act on other substrates in vivo. The chain is N-glycosidase R617 from Acanthamoeba polyphaga mimivirus (APMV).